A 207-amino-acid chain; its full sequence is MERKERLRAGIAAMGLDILETAQDRLLAYVDLLKKWNKTYNLTALRDEEKMIVHHLLDSLTLLPYIEGAQTMLDVGSGGGQPGIPAAVCRPDVQITLLDANTKKTAFLQQAVIELGLDNVRVVSGRVEAVSDVRADVITSRAFAELADFVSWTGHLLKDGGYWAAMKGVYPQGEIDRLPQDVCVEKVQRLDVPGLDAERHIAILRKR.

S-adenosyl-L-methionine-binding positions include G76, Q81, 127-128, and R141; that span reads VE.

Belongs to the methyltransferase superfamily. RNA methyltransferase RsmG family.

The protein localises to the cytoplasm. It carries out the reaction guanosine(527) in 16S rRNA + S-adenosyl-L-methionine = N(7)-methylguanosine(527) in 16S rRNA + S-adenosyl-L-homocysteine. Specifically methylates the N7 position of guanine in position 527 of 16S rRNA. The polypeptide is Ribosomal RNA small subunit methyltransferase G (Neisseria meningitidis serogroup C (strain 053442)).